Consider the following 253-residue polypeptide: Spermatogenesis-associated protein 9 (253 aa).

A helical transmembrane segment spans residues 144-166 (LTSIMCASYAALIYLTVCVNAVL). The segment covering 210–228 (AKPYRSLPEKPDSISDRPK) has biased composition (basic and acidic residues). A disordered region spans residues 210 to 231 (AKPYRSLPEKPDSISDRPKLPA).

The protein resides in the membrane. Its function is as follows. May play at role in testicular development/spermatogenesis and may be an important factor in male infertility. The protein is Spermatogenesis-associated protein 9 (SPATA9) of Bos taurus (Bovine).